Consider the following 474-residue polypeptide: Citrate synthase 4, mitochondrial (474 aa).

A mitochondrion-targeting transit peptide spans M1 to R16. Residues H308, H354, and D409 contribute to the active site.

It belongs to the citrate synthase family. In terms of assembly, homodimer.

Its subcellular location is the mitochondrion matrix. It carries out the reaction oxaloacetate + acetyl-CoA + H2O = citrate + CoA + H(+). It participates in carbohydrate metabolism; tricarboxylic acid cycle; isocitrate from oxaloacetate: step 1/2. The sequence is that of Citrate synthase 4, mitochondrial (CSY4) from Arabidopsis thaliana (Mouse-ear cress).